The primary structure comprises 363 residues: UDP-N-acetylglucosamine--N-acetylmuramyl-(pentapeptide) pyrophosphoryl-undecaprenol N-acetylglucosamine transferase (363 aa).

UDP-N-acetyl-alpha-D-glucosamine contacts are provided by residues 12–14 (TAG), serine 196, and glutamine 291.

It belongs to the glycosyltransferase 28 family. MurG subfamily.

The protein resides in the cell inner membrane. The catalysed reaction is di-trans,octa-cis-undecaprenyl diphospho-N-acetyl-alpha-D-muramoyl-L-alanyl-D-glutamyl-meso-2,6-diaminopimeloyl-D-alanyl-D-alanine + UDP-N-acetyl-alpha-D-glucosamine = di-trans,octa-cis-undecaprenyl diphospho-[N-acetyl-alpha-D-glucosaminyl-(1-&gt;4)]-N-acetyl-alpha-D-muramoyl-L-alanyl-D-glutamyl-meso-2,6-diaminopimeloyl-D-alanyl-D-alanine + UDP + H(+). The protein operates within cell wall biogenesis; peptidoglycan biosynthesis. In terms of biological role, cell wall formation. Catalyzes the transfer of a GlcNAc subunit on undecaprenyl-pyrophosphoryl-MurNAc-pentapeptide (lipid intermediate I) to form undecaprenyl-pyrophosphoryl-MurNAc-(pentapeptide)GlcNAc (lipid intermediate II). This Legionella pneumophila (strain Corby) protein is UDP-N-acetylglucosamine--N-acetylmuramyl-(pentapeptide) pyrophosphoryl-undecaprenol N-acetylglucosamine transferase.